A 671-amino-acid polypeptide reads, in one-letter code: DNA ligase (671 aa).

Residues 36-40, 85-86, and Glu115 each bind NAD(+); these read DHVYD and SM. The N6-AMP-lysine intermediate role is filled by Lys117. NAD(+)-binding residues include Arg138, Glu172, Lys287, and Lys311. Cys405, Cys408, Cys423, and Cys428 together coordinate Zn(2+). The region spanning 588–671 is the BRCT domain; sequence AADNFFKGKT…SKIEEKDTEK (84 aa).

This sequence belongs to the NAD-dependent DNA ligase family. LigA subfamily. Mg(2+) serves as cofactor. The cofactor is Mn(2+).

The enzyme catalyses NAD(+) + (deoxyribonucleotide)n-3'-hydroxyl + 5'-phospho-(deoxyribonucleotide)m = (deoxyribonucleotide)n+m + AMP + beta-nicotinamide D-nucleotide.. In terms of biological role, DNA ligase that catalyzes the formation of phosphodiester linkages between 5'-phosphoryl and 3'-hydroxyl groups in double-stranded DNA using NAD as a coenzyme and as the energy source for the reaction. It is essential for DNA replication and repair of damaged DNA. The chain is DNA ligase from Lactobacillus delbrueckii subsp. bulgaricus (strain ATCC 11842 / DSM 20081 / BCRC 10696 / JCM 1002 / NBRC 13953 / NCIMB 11778 / NCTC 12712 / WDCM 00102 / Lb 14).